The chain runs to 445 residues: Rab GDP dissociation inhibitor beta (445 aa).

An N-acetylmethionine modification is found at Met1. An N6-acetyllysine modification is found at Lys112. Ser130 is subject to Phosphoserine. Lys269 is subject to N6-acetyllysine. Ser382 is modified (phosphoserine).

Belongs to the Rab GDI family. In terms of assembly, interacts with RHOH. Interacts with the GDP-bound inactive forms of RAB3A, RAB3B, RAB3C, RAB5A, RAB5B, RAB5C, RAB8A, RAB8B, RAB10, RAB12, RAB35, and RAB43; binds RAB3D to a lesser extent. Interacts with DZIP1; this interaction negatively regulates the interaction of GDI2 with GDP-bound RAB8A.

The protein localises to the cytoplasm. It is found in the membrane. It localises to the golgi apparatus. The protein resides in the trans-Golgi network. In terms of biological role, GDP-dissociation inhibitor preventing the GDP to GTP exchange of most Rab proteins. By keeping these small GTPases in their inactive GDP-bound form regulates intracellular membrane trafficking. Negatively regulates protein transport to the cilium and ciliogenesis through the inhibition of RAB8A. The sequence is that of Rab GDP dissociation inhibitor beta (GDI2) from Sus scrofa (Pig).